Here is a 317-residue protein sequence, read N- to C-terminus: Tyrosine--tRNA ligase (317 aa).

Tyr-33 contributes to the L-tyrosine binding site. Residues 38–46 carry the 'HIGH' region motif; it reads PSGKIHMGH. Tyr-155, Gln-159, Asp-162, and Gln-177 together coordinate L-tyrosine. The short motif at 211–215 is the 'KMSKS' region element; it reads KMASS. Ser-214 lines the ATP pocket.

Belongs to the class-I aminoacyl-tRNA synthetase family. TyrS type 3 subfamily. Homodimer.

Its subcellular location is the cytoplasm. It carries out the reaction tRNA(Tyr) + L-tyrosine + ATP = L-tyrosyl-tRNA(Tyr) + AMP + diphosphate + H(+). Catalyzes the attachment of tyrosine to tRNA(Tyr) in a two-step reaction: tyrosine is first activated by ATP to form Tyr-AMP and then transferred to the acceptor end of tRNA(Tyr). This is Tyrosine--tRNA ligase from Methanosarcina acetivorans (strain ATCC 35395 / DSM 2834 / JCM 12185 / C2A).